Consider the following 116-residue polypeptide: Nucleoid-associated protein PMM0020 (116 aa).

Residues 87-98 (ESSTTTMKERMN) show a composition bias toward basic and acidic residues. Residues 87–116 (ESSTTTMKERMNDLTGGLNLNLPGLDNNDS) are disordered. The segment covering 99 to 116 (DLTGGLNLNLPGLDNNDS) has biased composition (low complexity).

The protein belongs to the YbaB/EbfC family. As to quaternary structure, homodimer.

The protein resides in the cytoplasm. Its subcellular location is the nucleoid. Binds to DNA and alters its conformation. May be involved in regulation of gene expression, nucleoid organization and DNA protection. The protein is Nucleoid-associated protein PMM0020 of Prochlorococcus marinus subsp. pastoris (strain CCMP1986 / NIES-2087 / MED4).